Consider the following 591-residue polypeptide: Aspartate--tRNA ligase (591 aa).

Glu175 contributes to the L-aspartate binding site. Residues 199–202 (QLFK) are aspartate. L-aspartate is bound at residue Arg221. ATP is bound by residues 221 to 223 (RDE) and Gln230. His449 is a binding site for L-aspartate. Glu483 serves as a coordination point for ATP. Arg490 serves as a coordination point for L-aspartate. 535 to 538 (GLDR) serves as a coordination point for ATP.

This sequence belongs to the class-II aminoacyl-tRNA synthetase family. Type 1 subfamily. As to quaternary structure, homodimer.

Its subcellular location is the cytoplasm. It catalyses the reaction tRNA(Asp) + L-aspartate + ATP = L-aspartyl-tRNA(Asp) + AMP + diphosphate. Its function is as follows. Catalyzes the attachment of L-aspartate to tRNA(Asp) in a two-step reaction: L-aspartate is first activated by ATP to form Asp-AMP and then transferred to the acceptor end of tRNA(Asp). This is Aspartate--tRNA ligase from Oceanobacillus iheyensis (strain DSM 14371 / CIP 107618 / JCM 11309 / KCTC 3954 / HTE831).